Here is a 501-residue protein sequence, read N- to C-terminus: Glycoprotein 3-alpha-L-fucosyltransferase A (501 aa).

The Cytoplasmic portion of the chain corresponds to 1-39 (MGVFSNLRGPKIGLTHEELPVVANGSTSSSSSPSSFKRK). A helical; Signal-anchor for type II membrane protein transmembrane segment spans residues 40–60 (VSTFLPICVALVVIIEIGFLC). Residues 61 to 501 (RLDNASLVDT…PCPKFEVVFV (441 aa)) are Lumenal-facing. Residues N64, N337, N420, and N481 are each glycosylated (N-linked (GlcNAc...) asparagine).

Belongs to the glycosyltransferase 10 family. Mg(2+) is required as a cofactor. Mn(2+) serves as cofactor. Post-translationally, glycosylation may be important for enzymatic activity.

Its subcellular location is the golgi apparatus. The protein resides in the golgi stack membrane. The enzyme catalyses N(4)-{beta-D-GlcNAc-(1-&gt;2)-alpha-D-Man-(1-&gt;3)-[beta-D-GlcNAc-(1-&gt;2)-alpha-D-Man-(1-&gt;6)]-beta-D-Man-(1-&gt;4)-beta-D-GlcNAc-(1-&gt;4)-beta-D-GlcNAc}-L-asparaginyl-[protein] + GDP-beta-L-fucose = N(4)-{beta-D-GlcNAc-(1-&gt;2)-alpha-D-Man-(1-&gt;3)-[beta-D-GlcNAc-(1-&gt;2)-alpha-D-Man-(1-&gt;6)]-beta-D-Man-(1-&gt;4)-beta-D-GlcNAc-(1-&gt;4)-[alpha-L-Fuc(1-&gt;3)]-beta-D-GlcNAc}-L-asparaginyl-[protein] + GDP + H(+). It functions in the pathway protein modification; protein glycosylation. Inhibited by Cu(2+) and Zn(2+). Involved in cell wall synthesis. Preferentially catalyzes the addition of fucose in alpha 1-3 linkage to the first GlcNAc residue next to the peptide chains in N-glycans. This Arabidopsis thaliana (Mouse-ear cress) protein is Glycoprotein 3-alpha-L-fucosyltransferase A (FUT11).